We begin with the raw amino-acid sequence, 248 residues long: MIWFWSTLLVTAIAVLSTANESSSGQEKLAVESILFVFAHPDDESMFFGPTIDYLGNQHSTRVHVLCLSNGNADGLGSVREKELVVAASKYQIDKTNVHVVSDPQLQDGMQAKWDPTDVAKHISQIIERYNIKTLITFDNKGISGHPNHIACYEGAMKIVKATPQVQVFVLESVNIFRKYISYLDTIPTLVQSQAGRNDTIIIHADRKSTQRIRDAMVRGHKSQMVWFRYGWIYLSKYMSNNVLKRAT.

Topologically, residues 1 to 7 are lumenal; it reads MIWFWST. A helical membrane pass occupies residues 8 to 24; that stretch reads LLVTAIAVLSTANESSS. At 25–248 the chain is on the cytoplasmic side; sequence GQEKLAVESI…MSNNVLKRAT (224 aa).

This sequence belongs to the PIGL family.

The protein localises to the endoplasmic reticulum membrane. It carries out the reaction a 6-(N-acetyl-alpha-D-glucosaminyl)-1-(1,2-diacyl-sn-glycero-3-phospho)-1D-myo-inositol + H2O = a 6-(alpha-D-glucosaminyl)-1-(1,2-diacyl-sn-glycero-3-phospho)-1D-myo-inositol + acetate. The protein operates within glycolipid biosynthesis; glycosylphosphatidylinositol-anchor biosynthesis. Its function is as follows. Involved in the second step of GPI biosynthesis. De-N-acetylation of N-acetylglucosaminyl-phosphatidylinositol. This chain is Probable N-acetylglucosaminyl-phosphatidylinositol de-N-acetylase (gpi12), found in Schizosaccharomyces pombe (strain 972 / ATCC 24843) (Fission yeast).